Here is a 475-residue protein sequence, read N- to C-terminus: BTB/POZ domain-containing protein 10 (475 aa).

The tract at residues 1 to 143 is disordered; that stretch reads MAGRPHPYDG…SSQSSSDGSC (143 aa). Residues 22–31 show a composition bias toward basic residues; sequence LHSRPRKLYK. A compositionally biased stretch (basic and acidic residues) spans 57-80; sequence GHERSRDRRRSSDRSRDSSHERTE. Over residues 81–94 the composition is skewed to polar residues; sequence SQLTPCIRNVTSPT. Over residues 97-107 the composition is skewed to basic and acidic residues; sequence HHVEREKDHSS. Positions 108-142 are enriched in low complexity; that stretch reads SRPSSPRPQKASPNGSISSAGNSSRNSSQSSSDGS. Residues 146–475 form an interaction with AKT family members region; it reads AGEMVFVYEN…LDPDAQNPML (330 aa). Positions 167–241 constitute a BTB domain; sequence ERVTLIVDNT…YKTGIIRCPD (75 aa). Residues 455–475 form a disordered region; it reads LPIHPPSGNSDLDPDAQNPML.

As to quaternary structure, interacts (via C-terminal 330-amino-acid region) with AKT1; AKT2 and AKT3. Interacts with PPP2CA and PPP1CA. In terms of tissue distribution, ubiquitously expressed. Highly expressed in adult brain, testis, aorta and small intestine and weakly expressed in the heart, lung, liver, kidney, pancreas, spleen, thymus, prostate, ovary and colon. Down-regulated in glioma.

Its subcellular location is the nucleus. It localises to the cytoplasm. Plays a major role as an activator of AKT family members by inhibiting PPP2CA-mediated dephosphorylation, thereby keeping AKTs activated. Plays a role in preventing motor neuronal death and accelerating the growth of pancreatic beta cells. In Homo sapiens (Human), this protein is BTB/POZ domain-containing protein 10 (BTBD10).